The sequence spans 214 residues: RNA pyrophosphohydrolase (214 aa).

In terms of domain architecture, Nudix hydrolase spans 6-149 (GFRPNVGIIL…KRDVYQLALT (144 aa)). The short motif at 38 to 59 (GGIKYGETPMQAMYRELHEETG) is the Nudix box element.

It belongs to the Nudix hydrolase family. RppH subfamily. The cofactor is a divalent metal cation.

Accelerates the degradation of transcripts by removing pyrophosphate from the 5'-end of triphosphorylated RNA, leading to a more labile monophosphorylated state that can stimulate subsequent ribonuclease cleavage. The chain is RNA pyrophosphohydrolase from Burkholderia cenocepacia (strain HI2424).